A 145-amino-acid chain; its full sequence is UPF0310 protein PH1033 (145 aa).

Belongs to the UPF0310 family.

The polypeptide is UPF0310 protein PH1033 (Pyrococcus horikoshii (strain ATCC 700860 / DSM 12428 / JCM 9974 / NBRC 100139 / OT-3)).